The primary structure comprises 159 residues: 2-C-methyl-D-erythritol 2,4-cyclodiphosphate synthase (159 aa).

Positions 10 and 12 each coordinate a divalent metal cation. 4-CDP-2-C-methyl-D-erythritol 2-phosphate is bound by residues 10–12 (DVH) and 36–37 (HS). Position 44 (His-44) interacts with a divalent metal cation. 4-CDP-2-C-methyl-D-erythritol 2-phosphate-binding positions include 58–60 (DIG), 63–67 (FPDTD), 102–108 (AQAPRMA), 134–137 (TTSE), Phe-141, and Arg-144.

Belongs to the IspF family. As to quaternary structure, homotrimer. A divalent metal cation is required as a cofactor.

The enzyme catalyses 4-CDP-2-C-methyl-D-erythritol 2-phosphate = 2-C-methyl-D-erythritol 2,4-cyclic diphosphate + CMP. It functions in the pathway isoprenoid biosynthesis; isopentenyl diphosphate biosynthesis via DXP pathway; isopentenyl diphosphate from 1-deoxy-D-xylulose 5-phosphate: step 4/6. In terms of biological role, involved in the biosynthesis of isopentenyl diphosphate (IPP) and dimethylallyl diphosphate (DMAPP), two major building blocks of isoprenoid compounds. Catalyzes the conversion of 4-diphosphocytidyl-2-C-methyl-D-erythritol 2-phosphate (CDP-ME2P) to 2-C-methyl-D-erythritol 2,4-cyclodiphosphate (ME-CPP) with a corresponding release of cytidine 5-monophosphate (CMP). This Cellvibrio japonicus (strain Ueda107) (Pseudomonas fluorescens subsp. cellulosa) protein is 2-C-methyl-D-erythritol 2,4-cyclodiphosphate synthase.